The sequence spans 293 residues: Ribosomal protein L11 methyltransferase (293 aa).

Positions 145, 166, 188, and 230 each coordinate S-adenosyl-L-methionine.

Belongs to the methyltransferase superfamily. PrmA family.

The protein resides in the cytoplasm. The catalysed reaction is L-lysyl-[protein] + 3 S-adenosyl-L-methionine = N(6),N(6),N(6)-trimethyl-L-lysyl-[protein] + 3 S-adenosyl-L-homocysteine + 3 H(+). Methylates ribosomal protein L11. The sequence is that of Ribosomal protein L11 methyltransferase from Shewanella sp. (strain ANA-3).